The primary structure comprises 266 residues: Type III pantothenate kinase (266 aa).

9–16 contributes to the ATP binding site; sequence DAGNSRIK. Substrate contacts are provided by residues Tyr96 and 103–106; that span reads GSDR. The Proton acceptor role is filled by Asp105. Thr129 contacts ATP. Thr189 contacts substrate.

This sequence belongs to the type III pantothenate kinase family. Homodimer. NH4(+) is required as a cofactor. Requires K(+) as cofactor.

Its subcellular location is the cytoplasm. It carries out the reaction (R)-pantothenate + ATP = (R)-4'-phosphopantothenate + ADP + H(+). The protein operates within cofactor biosynthesis; coenzyme A biosynthesis; CoA from (R)-pantothenate: step 1/5. Its function is as follows. Catalyzes the phosphorylation of pantothenate (Pan), the first step in CoA biosynthesis. The protein is Type III pantothenate kinase of Burkholderia lata (strain ATCC 17760 / DSM 23089 / LMG 22485 / NCIMB 9086 / R18194 / 383).